Consider the following 554-residue polypeptide: Chaperonin GroEL (554 aa).

ATP contacts are provided by residues 30 to 33 (TLGP), Lys51, 87 to 91 (DGTTT), Gly415, 479 to 481 (NAA), and Asp495.

Belongs to the chaperonin (HSP60) family. Forms a cylinder of 14 subunits composed of two heptameric rings stacked back-to-back. Interacts with the co-chaperonin GroES.

It localises to the cytoplasm. The catalysed reaction is ATP + H2O + a folded polypeptide = ADP + phosphate + an unfolded polypeptide.. Functionally, together with its co-chaperonin GroES, plays an essential role in assisting protein folding. The GroEL-GroES system forms a nano-cage that allows encapsulation of the non-native substrate proteins and provides a physical environment optimized to promote and accelerate protein folding. This Nitrosococcus oceani (strain ATCC 19707 / BCRC 17464 / JCM 30415 / NCIMB 11848 / C-107) protein is Chaperonin GroEL.